A 907-amino-acid chain; its full sequence is Catenin alpha-1 (907 aa).

A compositionally biased stretch (basic and acidic residues) spans 870-879 (VKREKLDDGQ). Residues 870–895 (VKREKLDDGQTNKVKRSSQKKHINPV) are disordered. Residues 882–892 (KVKRSSQKKHI) are compositionally biased toward basic residues.

The protein belongs to the vinculin/alpha-catenin family. In terms of assembly, interacts with ctnnb1, jupa and cdh2. Interacts with cdh1 during early stages of oogenesis, interaction is no longer present when oocyte develops into the unfertilized egg. Expressed in the skin (at protein level). Expressed in the ovary.

It is found in the cell junction. It localises to the adherens junction. Its subcellular location is the cytoplasm. The protein resides in the cytoskeleton. The protein localises to the cell membrane. It is found in the nucleus. In terms of biological role, associates with the cytoplasmic domain of a variety of cadherins, forming catenin and cadherin complexes which are further linked to the actin filament network and is thereby involved in cell-cell adhesion. Required for embryonic development, via maintenance of adherens junctions that facilitate the maintenance of the epithelial barrier. This chain is Catenin alpha-1, found in Danio rerio (Zebrafish).